A 319-amino-acid polypeptide reads, in one-letter code: Pantothenate kinase (319 aa).

ATP is bound at residue 96–103; the sequence is GSVAVGKS.

Belongs to the prokaryotic pantothenate kinase family.

It localises to the cytoplasm. It catalyses the reaction (R)-pantothenate + ATP = (R)-4'-phosphopantothenate + ADP + H(+). It participates in cofactor biosynthesis; coenzyme A biosynthesis; CoA from (R)-pantothenate: step 1/5. The protein is Pantothenate kinase of Bacillus velezensis (strain DSM 23117 / BGSC 10A6 / LMG 26770 / FZB42) (Bacillus amyloliquefaciens subsp. plantarum).